We begin with the raw amino-acid sequence, 513 residues long: Mannan endo-1,4-beta-mannosidase A and B (513 aa).

The first 26 residues, 1–26 (MKVYKKVAFVMAFIMFFSVLPTISMS), serve as a signal peptide directing secretion. The 313-residue stretch at 41 to 353 (QTTKNVYSWL…FNDSWVVNRG (313 aa)) folds into the GH26 domain. His132 contributes to the substrate binding site. The active-site Proton donor is Glu195. Residues Trp200 and Tyr270 each coordinate substrate. The Nucleophile role is filled by Glu295. A substrate-binding site is contributed by 429 to 430 (IK).

Belongs to the glycosyl hydrolase 26 family.

It localises to the secreted. It carries out the reaction Random hydrolysis of (1-&gt;4)-beta-D-mannosidic linkages in mannans, galactomannans and glucomannans.. In terms of biological role, could be involved in the degradation of glucomannan and catalyzes the endo hydrolysis of beta-1,4-linked mannan, galactomannan and glucomannan. This Caldalkalibacillus mannanilyticus (strain DSM 16130 / CIP 109019 / JCM 10596 / AM-001) (Bacillus mannanilyticus) protein is Mannan endo-1,4-beta-mannosidase A and B.